We begin with the raw amino-acid sequence, 307 residues long: Methionyl-tRNA formyltransferase (307 aa).

Position 108-111 (108-111) interacts with (6S)-5,6,7,8-tetrahydrofolate; it reads SLLP.

Belongs to the Fmt family.

The catalysed reaction is L-methionyl-tRNA(fMet) + (6R)-10-formyltetrahydrofolate = N-formyl-L-methionyl-tRNA(fMet) + (6S)-5,6,7,8-tetrahydrofolate + H(+). Attaches a formyl group to the free amino group of methionyl-tRNA(fMet). The formyl group appears to play a dual role in the initiator identity of N-formylmethionyl-tRNA by promoting its recognition by IF2 and preventing the misappropriation of this tRNA by the elongation apparatus. This chain is Methionyl-tRNA formyltransferase, found in Xanthomonas euvesicatoria pv. vesicatoria (strain 85-10) (Xanthomonas campestris pv. vesicatoria).